A 177-amino-acid polypeptide reads, in one-letter code: Ribosome rescue factor SmrB (177 aa).

The region spanning 92–167 (LDLHGLTRQK…GDAAILVLIE (76 aa)) is the Smr domain.

The protein belongs to the SmrB family. In terms of assembly, associates with collided ribosomes, but not with correctly translating polysomes.

Functionally, acts as a ribosome collision sensor. Detects stalled/collided disomes (pairs of ribosomes where the leading ribosome is stalled and a second ribosome has collided with it) and endonucleolytically cleaves mRNA at the 5' boundary of the stalled ribosome. Stalled/collided disomes form a new interface (primarily via the 30S subunits) that binds SmrB. Cleaved mRNA becomes available for tmRNA ligation, leading to ribosomal subunit dissociation and rescue of stalled ribosomes. The protein is Ribosome rescue factor SmrB of Haemophilus ducreyi (strain 35000HP / ATCC 700724).